An 873-amino-acid polypeptide reads, in one-letter code: Nitrate reductase [NADPH] (873 aa).

Residues 30–61 (TELDTADIPLPPPSKEPTEVLSLDKTTPDSHV) are disordered. A Mo-molybdopterin-binding site is contributed by cysteine 150. The region spanning 512–587 (TRIIDLEEFK…MPDYHIGTLD (76 aa)) is the Cytochrome b5 heme-binding domain. Residues histidine 547 and histidine 570 each coordinate heme. One can recognise an FAD-binding FR-type domain in the interval 616–729 (KAWTKATLTK…KGPTGRFEYL (114 aa)). FAD-binding positions include 672–675 (RSYT), 689–693 (LIKIY), 703–705 (KMT), and threonine 756. 843–852 (MVLVCGPEAM) provides a ligand contact to NADP(+).

The protein belongs to the nitrate reductase family. As to quaternary structure, homodimer. Requires FAD as cofactor. It depends on heme as a cofactor. The cofactor is Mo-molybdopterin.

The enzyme catalyses nitrite + NADP(+) + H2O = nitrate + NADPH + H(+). Its function is as follows. Nitrate reductase is a key enzyme involved in the first step of nitrate assimilation in plants, fungi and bacteria. The chain is Nitrate reductase [NADPH] (niaD) from Emericella nidulans (strain FGSC A4 / ATCC 38163 / CBS 112.46 / NRRL 194 / M139) (Aspergillus nidulans).